The chain runs to 108 residues: UPF0060 membrane protein YnfA (108 aa).

Topologically, residues 1-5 are periplasmic; it reads MIKTT. A helical transmembrane segment spans residues 6 to 26; the sequence is LLFFATALCEIIGCFLPWLWL. Residues 27–30 lie on the Cytoplasmic side of the membrane; that stretch reads KRNA. The chain crosses the membrane as a helical span at residues 31-51; it reads SIWLLLPAGISLALFVWLLTL. Residues 52–60 lie on the Periplasmic side of the membrane; it reads HPAASGRVY. A helical transmembrane segment spans residues 61 to 81; sequence AAYGGVYVCTALIWLRVVDGV. Topologically, residues 82-84 are cytoplasmic; sequence KLT. Residues 85–105 form a helical membrane-spanning segment; the sequence is LYDWTGALIALCGMLIIVAGW. The Periplasmic portion of the chain corresponds to 106-108; it reads GRT.

This sequence belongs to the UPF0060 family.

The protein resides in the cell inner membrane. The chain is UPF0060 membrane protein YnfA from Escherichia coli O127:H6 (strain E2348/69 / EPEC).